A 254-amino-acid chain; its full sequence is uncharacterized protein (254 aa).

Residues 6-239 (LSVDGVEFAY…NIKAVYGVDA (234 aa)) enclose the ABC transporter domain. 38–45 (GVNGAGKS) is an ATP binding site.

Belongs to the ABC transporter superfamily.

This is an uncharacterized protein from Methanocaldococcus jannaschii (strain ATCC 43067 / DSM 2661 / JAL-1 / JCM 10045 / NBRC 100440) (Methanococcus jannaschii).